Reading from the N-terminus, the 310-residue chain is Probable GTP 3',8-cyclase (310 aa).

The Radical SAM core domain maps to 5–218 (KYGRSLQKLR…VNIIFELGGR (214 aa)). Arginine 14 provides a ligand contact to GTP. Residues cysteine 21, cysteine 25, and cysteine 28 each coordinate [4Fe-4S] cluster. Lysine 62 serves as a coordination point for GTP. Residue glycine 66 participates in S-adenosyl-L-methionine binding. Position 91 (threonine 91) interacts with GTP. Serine 115 provides a ligand contact to S-adenosyl-L-methionine. A GTP-binding site is contributed by lysine 153. [4Fe-4S] cluster contacts are provided by cysteine 251, cysteine 254, and cysteine 268.

It belongs to the radical SAM superfamily. MoaA family. It depends on [4Fe-4S] cluster as a cofactor.

The enzyme catalyses GTP + AH2 + S-adenosyl-L-methionine = (8S)-3',8-cyclo-7,8-dihydroguanosine 5'-triphosphate + 5'-deoxyadenosine + L-methionine + A + H(+). It functions in the pathway cofactor biosynthesis; molybdopterin biosynthesis. Functionally, catalyzes the cyclization of GTP to (8S)-3',8-cyclo-7,8-dihydroguanosine 5'-triphosphate. This Pyrobaculum aerophilum (strain ATCC 51768 / DSM 7523 / JCM 9630 / CIP 104966 / NBRC 100827 / IM2) protein is Probable GTP 3',8-cyclase.